A 430-amino-acid polypeptide reads, in one-letter code: Histidinol dehydrogenase (430 aa).

NAD(+) is bound by residues Tyr-124, Gln-185, and Asn-208. Substrate-binding residues include Ser-233, Gln-255, and His-258. Zn(2+)-binding residues include Gln-255 and His-258. Catalysis depends on proton acceptor residues Glu-324 and His-325. Positions 325, 358, 412, and 418 each coordinate substrate. Asp-358 is a binding site for Zn(2+). Residue His-418 coordinates Zn(2+).

It belongs to the histidinol dehydrogenase family. Zn(2+) serves as cofactor.

The enzyme catalyses L-histidinol + 2 NAD(+) + H2O = L-histidine + 2 NADH + 3 H(+). It participates in amino-acid biosynthesis; L-histidine biosynthesis; L-histidine from 5-phospho-alpha-D-ribose 1-diphosphate: step 9/9. Functionally, catalyzes the sequential NAD-dependent oxidations of L-histidinol to L-histidinaldehyde and then to L-histidine. This is Histidinol dehydrogenase from Leptospira biflexa serovar Patoc (strain Patoc 1 / Ames).